We begin with the raw amino-acid sequence, 281 residues long: RAD52 motif-containing protein 1 (281 aa).

The segment at 1–92 is necessary for nuclear localization and for nucleolar accumulation in response to heat shock; the sequence is MAELISFVVP…KPLFQTSPVK (92 aa). The RRM domain maps to 15–98; that stretch reads KVLLVWDLST…SPVKVRLGTR (84 aa). A necessary for nuclear and nucleolar localization region spans residues 90 to 133; sequence PVKVRLGTRHKALQHQAFALNSSRCQELANYYFGFSGWSKRIIK.

As to quaternary structure, homodimer.

It localises to the nucleus. Its subcellular location is the cytoplasm. The protein resides in the nucleolus. It is found in the cajal body. The protein localises to the PML body. May confer resistance to the antitumor agent cisplatin. Binds to DNA and RNA. This Mus musculus (Mouse) protein is RAD52 motif-containing protein 1 (Rdm1).